The chain runs to 220 residues: 7-cyano-7-deazaguanine synthase (220 aa).

7 to 17 is an ATP binding site; it reads LSGGMDSSTLA. 4 residues coordinate Zn(2+): Cys-187, Cys-195, Cys-198, and Cys-201.

The protein belongs to the QueC family. The cofactor is Zn(2+).

It catalyses the reaction 7-carboxy-7-deazaguanine + NH4(+) + ATP = 7-cyano-7-deazaguanine + ADP + phosphate + H2O + H(+). It functions in the pathway purine metabolism; 7-cyano-7-deazaguanine biosynthesis. Functionally, catalyzes the ATP-dependent conversion of 7-carboxy-7-deazaguanine (CDG) to 7-cyano-7-deazaguanine (preQ(0)). This Methanospirillum hungatei JF-1 (strain ATCC 27890 / DSM 864 / NBRC 100397 / JF-1) protein is 7-cyano-7-deazaguanine synthase.